Reading from the N-terminus, the 314-residue chain is Dihydroorotate dehydrogenase (fumarate) (314 aa).

Substrate contacts are provided by residues Lys-46, 70–74 (NSMGL), and Asn-130. 46 to 47 (KS) contributes to the FMN binding site. Residue Asn-130 coordinates FMN. Catalysis depends on nucleophile residues Ser-132 and Cys-133. The FMN site is built by Lys-167 and Ile-195. Position 196–197 (196–197 (NS)) interacts with substrate. Residues Gly-224, 252 to 253 (GG), and 274 to 275 (GT) contribute to the FMN site.

It belongs to the dihydroorotate dehydrogenase family. Type 1 subfamily. In terms of assembly, homodimer. FMN serves as cofactor.

The protein resides in the cytoplasm. It catalyses the reaction (S)-dihydroorotate + fumarate = orotate + succinate. It functions in the pathway pyrimidine metabolism; UMP biosynthesis via de novo pathway. Functionally, catalyzes the conversion of dihydroorotate to orotate with fumarate as the electron acceptor. In Saccharomyces mikatae (Yeast), this protein is Dihydroorotate dehydrogenase (fumarate) (URA1).